Reading from the N-terminus, the 207-residue chain is Small ribosomal subunit protein uS4 (207 aa).

Residues 26 to 47 (AINNKNYKPGQQGNSSSISKPS) form a disordered region. The span at 28–39 (NNKNYKPGQQGN) shows a compositional bias: polar residues. Residues 95–158 (RRLDAVVYRL…KQIPIVIGAI (64 aa)) enclose the S4 RNA-binding domain.

Belongs to the universal ribosomal protein uS4 family. Part of the 30S ribosomal subunit. Contacts protein S5. The interaction surface between S4 and S5 is involved in control of translational fidelity.

Its function is as follows. One of the primary rRNA binding proteins, it binds directly to 16S rRNA where it nucleates assembly of the body of the 30S subunit. In terms of biological role, with S5 and S12 plays an important role in translational accuracy. This chain is Small ribosomal subunit protein uS4, found in Orientia tsutsugamushi (strain Boryong) (Rickettsia tsutsugamushi).